Consider the following 148-residue polypeptide: UPF0756 membrane protein YeaL (148 aa).

Helical transmembrane passes span 14-34, 51-71, 86-106, and 121-141; these read ALGF…LIIV, LSIG…SGTL, LVAI…VTLM, and VLGV…AGLV.

It belongs to the UPF0756 family.

The protein resides in the cell membrane. The chain is UPF0756 membrane protein YeaL from Escherichia coli (strain B / REL606).